Here is a 194-residue protein sequence, read N- to C-terminus: Histone H1.0 (194 aa).

Met1 carries the post-translational modification N-acetylmethionine. Positions 1 to 26 (MTENSTSTPAAKPKRAKAAKKSTDHP) are disordered. Thr2 carries the N-acetylthreonine; in Histone H1.0, N-terminally processed modification. The H15 domain occupies 24–97 (DHPKYSDMIV…GASGSFRLAK (74 aa)). The residue at position 42 (Arg42) is a Citrulline. A disordered region spans residues 86–194 (GVGASGSFRL…SSAKRASKKK (109 aa)). The residue at position 104 (Ser104) is an ADP-ribosylserine. Basic residues predominate over residues 105–194 (VAFKKTKKEV…SSAKRASKKK (90 aa)).

This sequence belongs to the histone H1/H5 family. In terms of processing, ADP-ribosylated on Ser-104 in response to DNA damage.

The protein resides in the nucleus. It is found in the chromosome. In terms of biological role, histones H1 are necessary for the condensation of nucleosome chains into higher-order structures. The histones H1.0 are found in cells that are in terminal stages of differentiation or that have low rates of cell division. The polypeptide is Histone H1.0 (H1-0) (Rattus norvegicus (Rat)).